A 507-amino-acid polypeptide reads, in one-letter code: Probable cyclic di-GMP phosphodiesterase PdeG (507 aa).

The next 2 helical transmembrane spans lie at 4 to 24 (TLIPILVAICLFITGVAILNI) and 217 to 237 (LIDKGFGILIFILLIACAAAF). Residues 246-500 (SATPEEILRR…DLVKIILSKP (255 aa)) enclose the EAL domain.

It is found in the cell membrane. The catalysed reaction is 3',3'-c-di-GMP + H2O = 5'-phosphoguanylyl(3'-&gt;5')guanosine + H(+). Its function is as follows. Phosphodiesterase (PDE) that catalyzes the hydrolysis of cyclic-di-GMP (c-di-GMP) to 5'-pGpG. This Escherichia coli (strain K12) protein is Probable cyclic di-GMP phosphodiesterase PdeG.